The primary structure comprises 359 residues: E3 ubiquitin-protein ligase RNF146 (359 aa).

The segment at 36–74 adopts an RING-type zinc-finger fold; that stretch reads CAICLQTCVHPVSLPCKHVFCYLCVKGASWLGKRCALCR. Glycyl lysine isopeptide (Lys-Gly) (interchain with G-Cter in ubiquitin) cross-links involve residues Lys-84 and Lys-94. Residues 91–167 enclose the WWE domain; the sequence is EELKAASRGN…EHGRRRKIKR (77 aa). Tyr-107, Arg-110, and Trp-114 together coordinate a glycoprotein. A Glycyl lysine isopeptide (Lys-Gly) (interchain with G-Cter in ubiquitin) cross-link involves residue Lys-130. A glycoprotein is bound by residues Tyr-144, Gln-153, Arg-163, and Lys-175. A Glycyl lysine isopeptide (Lys-Gly) (interchain with G-Cter in ubiquitin) cross-link involves residue Lys-175. The segment at 259 to 359 is disordered; the sequence is ERSHRGEGEE…PDGQCTVTEV (101 aa). The segment covering 284–298 has biased composition (acidic residues); the sequence is SVEETESDASSDSED. A phosphoserine mark is found at Ser-290 and Ser-294. Polar residues predominate over residues 306–322; it reads HSLTQQRLLVPNANQTV.

As to quaternary structure, can form homooligomers. Interacts with PARsylated AXIN1, AXIN2, BLZF1, CASC3, H1-2, IPO7, LIG3, NCL, PARP1, XRCC1, XRCC5 and XRCC6. Interacts with DDB1, DHX15, IQGAP1, LRPPRC, PARP2, PRKDC, RUVBL2, TNKS1 and TNKS2. Binding often leads to interactor ubiquitination, in the presence of the appropriate E1 and E2 enzymes, and proteasomal degradation. Ubiquitinated; autoubiquitinated. Autoubiquitination is enhanced upon poly(ADP-ribose)-binding.

The protein localises to the cytoplasm. The protein resides in the cytosol. It localises to the nucleus. The catalysed reaction is S-ubiquitinyl-[E2 ubiquitin-conjugating enzyme]-L-cysteine + [acceptor protein]-L-lysine = [E2 ubiquitin-conjugating enzyme]-L-cysteine + N(6)-ubiquitinyl-[acceptor protein]-L-lysine.. It participates in protein modification; protein ubiquitination. Its function is as follows. E3 ubiquitin-protein ligase that specifically binds poly-ADP-ribosylated (PARsylated) proteins and mediates their ubiquitination and subsequent degradation. May regulate many important biological processes, such as cell survival and DNA damage response. Acts as an activator of the Wnt signaling pathway by mediating the ubiquitination of PARsylated AXIN1 and AXIN2, 2 key components of the beta-catenin destruction complex. Acts in cooperation with tankyrase proteins (TNKS and TNKS2), which mediate PARsylation of target proteins AXIN1, AXIN2, BLZF1, CASC3, TNKS and TNKS2. Recognizes and binds tankyrase-dependent PARsylated proteins via its WWE domain and mediates their ubiquitination, leading to their degradation. Different ubiquitin linkage types have been observed: TNKS2 undergoes ubiquitination at 'Lys-48' and 'Lys-63', while AXIN1 is only ubiquitinated at 'Lys-48'. May regulate TNKS and TNKS2 subcellular location, preventing aggregation at a centrosomal location. Neuroprotective protein. Protects the brain against N-methyl-D-aspartate (NMDA) receptor-mediated glutamate excitotoxicity and ischemia, by interfering with PAR-induced cell death, called parthanatos. Prevents nuclear translocation of AIFM1 in a PAR-binding dependent manner. Does not affect PARP1 activation. Protects against cell death induced by DNA damaging agents, such as N-methyl-N-nitro-N-nitrosoguanidine (MNNG) and rescues cells from G1 arrest. Promotes cell survival after gamma-irradiation. Facilitates DNA repair. In Ailuropoda melanoleuca (Giant panda), this protein is E3 ubiquitin-protein ligase RNF146 (RNF146).